A 462-amino-acid chain; its full sequence is Na(+)/H(+) antiporter NhaA (462 aa).

11 helical membrane passes run 24–44 (ISGLIMLGFALAGLVLANLPL), 66–86 (LPIGHWAQDGLLTIFFLTVGL), 102–122 (AAAVPMLCAVGGMITPPILFL), 156–176 (GWAVPTATDIAFSLAVLALFA), 196–216 (LLAIILIAVFFSSVNAWYWFI), 235–255 (PWIAVGVVGILAWIMMFEAGI), 256–275 (HPTLAGVLVGLLTPARVMHG), 290–310 (PFSALLALPIFALFATGVHFE), 312–332 (MSPLLLLSPLVIALIVALVVG), 361–381 (MIPAAVACGIGFTVSFLIASL), and 392–412 (ARFGVLVASLIAAAISGVLLS).

It belongs to the NhaA Na(+)/H(+) (TC 2.A.33) antiporter family.

It localises to the cell membrane. The catalysed reaction is Na(+)(in) + 2 H(+)(out) = Na(+)(out) + 2 H(+)(in). Na(+)/H(+) antiporter that extrudes sodium in exchange for external protons. The sequence is that of Na(+)/H(+) antiporter NhaA from Bifidobacterium breve (strain NCIMB 8807 / UCC2003).